The following is a 1798-amino-acid chain: Focadhesin (1798 aa).

The residue at position 816 (Lys816) is an N6-acetyllysine.

As to quaternary structure, interacts with VCL. In terms of tissue distribution, expressed by glial and neuronal cells in brain.

The protein resides in the cell junction. The protein localises to the focal adhesion. It localises to the cytoplasm. Its subcellular location is the cytosol. In terms of biological role, required for the maintenance of SKIC2 and SKIC3 proteostatic levels in the liver. May be involved in the regulation of RNA degradation by the exosome complex. Potential tumor suppressor in gliomas. This is Focadhesin (Focad) from Mus musculus (Mouse).